The following is a 529-amino-acid chain: MVAQKSVSNATFKNKEKPQEVRRANIVAARAVADAIRTSLGPKGMDKMIKTSRGEIIISNDGHTILKQMAILHPVAKMLVDVSAAQDSEAGDGTTSVVILTGALLGAADRLLNKGIHPTIIAESFQKAARRSVETLLEICHPVSLDDREDLIRAASTSLSSKIVSQYSSFLSPLAVDAVLSITEKDSKTVDLNDIRLVKKVGGTIGDTEMVDGVVLTQTVVKTAGGPTMKEKAKIGLIQFQISPPKPDTENNIVVSDYRQMDKILKEERAYLLNICKKIKKAKCNVLLIQKSILRDAVNDLALHFLAKLGIMVIKDIEREEIEFLSKSLGCKPISDVELFTEDRLGSADLVEEIDSDGTKIVKFSGVKGVNAKPTVSVIIRGANSMILDETERSLHDALCVIRCLVKERGLIAGGGAPEIEISRRLERESRSMEGVEAYIWQEFAQALEVIPTTLAENAGLNSIKVITELRSRHENGDVNEGISVRRSGTTNTYEEHILQPVLVSTSAITLASECVKSILRIDDITFSR.

It belongs to the TCP-1 chaperonin family. Heterooligomeric complex of about 850 to 900 kDa that forms two stacked rings, 12 to 16 nm in diameter.

The protein localises to the cytoplasm. Molecular chaperone; assists the folding of proteins upon ATP hydrolysis. Known to play a role, in vitro, in the folding of actin and tubulin. This chain is T-complex protein 1 subunit delta (CCT4), found in Candida glabrata (strain ATCC 2001 / BCRC 20586 / JCM 3761 / NBRC 0622 / NRRL Y-65 / CBS 138) (Yeast).